A 954-amino-acid polypeptide reads, in one-letter code: Kinesin-like protein KIN-14A (954 aa).

In terms of domain architecture, Calponin-homology (CH) spans 24-142; it reads ALRRHQAATW…CVISLKSYHE (119 aa). The stretch at 242 to 293 forms a coiled coil; it reads LSRQLEKEQSSNSQVENRRRLLQAQESELLELKSMFQEVKIDFRTLKTQFQD. Residues 332 to 651 form the Kinesin motor domain; it reads NIRVFCRIRP…LKFAQRASCV (320 aa). Residue 413–420 participates in ATP binding; the sequence is GQTGSGKT. Residues 656-692 adopt a coiled-coil conformation; it reads AHANKESNEIRELKEQVENLKRALAAKELEKSSFKLK. A compositionally biased stretch (basic and acidic residues) spans 697–709; that stretch reads VRERAKQVPERTP. Disordered stretches follow at residues 697 to 743, 824 to 858, and 882 to 954; these read VRER…TKLN, NLEV…RKSI, and PAKI…KRWL. 2 stretches are compositionally biased toward polar residues: residues 831–849 and 886–898; these read DEPS…NATK and ANST…SSIT.

Belongs to the TRAFAC class myosin-kinesin ATPase superfamily. Kinesin family. KIN-14 subfamily.

The polypeptide is Kinesin-like protein KIN-14A (Oryza sativa subsp. japonica (Rice)).